We begin with the raw amino-acid sequence, 397 residues long: DnaJ homolog subfamily A member 4 (397 aa).

One can recognise a J domain in the interval 4 to 70; it reads ETQYYDILGV…RDIYDQGGEQ (67 aa). Residue Ser-18 is modified to Phosphoserine. Residues 122-206 form a CR-type zinc finger; sequence GITKKLALQK…CSGAKVTREK (85 aa). Residues Cys-135, Cys-138, Cys-151, Cys-154, Cys-178, Cys-181, Cys-194, and Cys-197 each coordinate Zn(2+). CXXCXGXG motif repeat units lie at residues 135–142, 151–158, 178–185, and 194–201; these read CEKCEGIG, CPLCKGRG, CIECKGQG, and CENCSGAK. Over residues 366–380 the composition is skewed to basic and acidic residues; that stretch reads EFNPNEQSWRQHREA. A disordered region spans residues 366-397; sequence EFNPNEQSWRQHREAYEEDDEEPRAGVQCQTA. At Cys-394 the chain carries Cysteine methyl ester. Cys-394 carries S-farnesyl cysteine lipidation. The propeptide at 395–397 is removed in mature form; the sequence is QTA.

In terms of tissue distribution, specifically expressed in testis and heart.

It localises to the membrane. This Mus musculus (Mouse) protein is DnaJ homolog subfamily A member 4 (Dnaja4).